A 502-amino-acid chain; its full sequence is Probable cytosol aminopeptidase (502 aa).

Mn(2+)-binding residues include lysine 269 and aspartate 274. Lysine 281 is an active-site residue. Residues aspartate 292, aspartate 351, and glutamate 353 each coordinate Mn(2+). The active site involves arginine 355.

The protein belongs to the peptidase M17 family. The cofactor is Mn(2+).

The protein localises to the cytoplasm. It carries out the reaction Release of an N-terminal amino acid, Xaa-|-Yaa-, in which Xaa is preferably Leu, but may be other amino acids including Pro although not Arg or Lys, and Yaa may be Pro. Amino acid amides and methyl esters are also readily hydrolyzed, but rates on arylamides are exceedingly low.. It catalyses the reaction Release of an N-terminal amino acid, preferentially leucine, but not glutamic or aspartic acids.. Functionally, presumably involved in the processing and regular turnover of intracellular proteins. Catalyzes the removal of unsubstituted N-terminal amino acids from various peptides. In Vibrio campbellii (strain ATCC BAA-1116), this protein is Probable cytosol aminopeptidase.